Reading from the N-terminus, the 256-residue chain is Hemin import ATP-binding protein HmuV (256 aa).

One can recognise an ABC transporter domain in the interval 2-238 (ISAQNLVYSL…QALTMLYGAD (237 aa)). 34-41 (GPNGAGKS) serves as a coordination point for ATP.

This sequence belongs to the ABC transporter superfamily. Heme (hemin) importer (TC 3.A.1.14.5) family. In terms of assembly, the complex is composed of two ATP-binding proteins (HmuV), two transmembrane proteins (HmuU) and a solute-binding protein (HmuT).

The protein resides in the cell inner membrane. Part of the ABC transporter complex HmuTUV involved in hemin import. Responsible for energy coupling to the transport system. The polypeptide is Hemin import ATP-binding protein HmuV (Shigella dysenteriae serotype 1 (strain Sd197)).